The primary structure comprises 82 residues: Omega-conotoxin-like Am6.2 (82 aa).

An N-terminal signal peptide occupies residues 1–22; it reads MKLTCMMIVAVLFLTAWTFVTA. Positions 23-52 are excised as a propeptide; sequence VPHSSNVLENLYLKARHEMENQEASKLNMR. 3 cysteine pairs are disulfide-bonded: cysteine 56/cysteine 73, cysteine 63/cysteine 77, and cysteine 72/cysteine 81. Tryptophan 76 is subject to 6'-bromotryptophan; partial; in Am6.2b (major form).

It belongs to the conotoxin O1 family. In terms of processing, mostly non-hydroxylated. Two forms of this peptides have been described. Am6.2a (Am3136) is not unmodified, while Am6.2b (Am3214) is Trp-76 brominated. Both forms are found in venom with a much more abundant brominated form. As to expression, expressed by the venom duct.

Its subcellular location is the secreted. Its function is as follows. Omega-conotoxins act at presynaptic membranes, they bind and block voltage-gated calcium channels (Cav). In Conus amadis (Amadis cone), this protein is Omega-conotoxin-like Am6.2.